We begin with the raw amino-acid sequence, 225 residues long: Protein-L-isoaspartate O-methyltransferase (225 aa).

The active site involves serine 75.

This sequence belongs to the methyltransferase superfamily. L-isoaspartyl/D-aspartyl protein methyltransferase family.

The protein resides in the cytoplasm. The enzyme catalyses [protein]-L-isoaspartate + S-adenosyl-L-methionine = [protein]-L-isoaspartate alpha-methyl ester + S-adenosyl-L-homocysteine. Functionally, catalyzes the methyl esterification of L-isoaspartyl residues in peptides and proteins that result from spontaneous decomposition of normal L-aspartyl and L-asparaginyl residues. It plays a role in the repair and/or degradation of damaged proteins. The chain is Protein-L-isoaspartate O-methyltransferase from Xanthomonas campestris pv. campestris (strain 8004).